Reading from the N-terminus, the 432-residue chain is uncharacterized protein (432 aa).

12 helical membrane-spanning segments follow: residues 35–55 (VARV…VIYL), 60–80 (LPPA…IATG), 112–132 (VAGM…PLWS), 144–164 (VGLL…LGAL), 185–205 (LAVA…LWAA), 209–229 (AVAW…ASLL), 242–262 (AHSI…PVLL), 274–294 (GAVI…LSAM), 313–333 (LIAP…AAGL), 359–379 (AAAV…AAAL), 384–404 (LLGW…PMPL), and 408–428 (TVIA…AALA).

This sequence to M.tuberculosis Rv3630 and M.bovis Mb3654.

Its subcellular location is the cell membrane. This is an uncharacterized protein from Mycobacterium tuberculosis (strain CDC 1551 / Oshkosh).